The primary structure comprises 652 residues: Transmembrane 9 superfamily member 12 (652 aa).

Residues 1 to 20 (MFGVYRVFVLLVFVSQLCNG) form the signal peptide. Residues 21 to 286 (FYLPGSYMHT…LKMEGARVHW (266 aa)) lie on the Lumenal side of the membrane. The helical transmembrane segment at 287-307 (FSILNSLMVIFFLAGIVFVIF) threads the bilayer. Residues 308 to 362 (LRTVRRDLTKYEELDKEAQAQMNEELSGWKLVVGDVFREPEMSKLLCIMVGDGVR) lie on the Cytoplasmic side of the membrane. The helical transmembrane segment at 363–383 (ITGMAVVTIVFAALGFMSPAS) threads the bilayer. Topologically, residues 384 to 386 (RGM) are lumenal. The chain crosses the membrane as a helical span at residues 387–407 (LLTGMIILYLFLGIVAGYAGV). Residues 408-426 (RLWRTVKGTSEGWRSLSWS) are Cytoplasmic-facing. The chain crosses the membrane as a helical span at residues 427-447 (IACFFPGIAFVILTVLNFLLW). Topologically, residues 448–460 (SSNSTGAIPISLY) are lumenal. Residues 461–481 (FELLALWFCISVPLTLFGGFL) traverse the membrane as a helical segment. The Cytoplasmic segment spans residues 482–510 (GTRAEAIQFPVRTNQIPREIPERKYPSWL). Residues 511-531 (LVLGAGTLPFGTLFIELFFIF) traverse the membrane as a helical segment. Residues 532–541 (SSIWLGRFYY) lie on the Lumenal side of the membrane. Residues 542–562 (VFGFLLIVLLLLVVVCAEVSV) traverse the membrane as a helical segment. At 563-580 (VLTYMHLCVEDWRWWWKA) the chain is on the cytoplasmic side. The chain crosses the membrane as a helical span at residues 581-601 (FYASGSVALYVFAYSINYLVF). Residues 602-613 (DLQSLSGPVSAM) are Lumenal-facing. The chain crosses the membrane as a helical span at residues 614 to 634 (LYIGYSLLMAIAIMLATGTIG). Residues 635–652 (FLTSFYFVHYLFSSVKID) lie on the Cytoplasmic side of the membrane. The Endoplasmic reticulum export signal motif lies at 641–646 (FVHYLF). The Golgi retention signal signature appears at 650–652 (KID).

This sequence belongs to the nonaspanin (TM9SF) (TC 9.A.2) family.

It localises to the endosome membrane. Its subcellular location is the golgi apparatus membrane. This is Transmembrane 9 superfamily member 12 from Arabidopsis thaliana (Mouse-ear cress).